We begin with the raw amino-acid sequence, 2201 residues long: Genome polyprotein (2201 aa).

G2 carries the N-myristoyl glycine; by host lipid modification. The Cytoplasmic portion of the chain corresponds to G2–Q1511. Positions K566–V582 are amphipathic alpha-helix. The short motif at R858–D860 is the Cell attachment site element. Residues H888 and D906 each act as for protease 2A activity in the active site. Positions 923 and 925 each coordinate Zn(2+). The active-site For protease 2A activity is the C977. C983 and H985 together coordinate Zn(2+). The segment at N1117 to Q1189 is membrane-binding. Residues N1117–T1255 form an oligomerization region. The interval A1138–Q1142 is RNA-binding. In terms of domain architecture, SF3 helicase spans E1221–N1377. Positions 1385, 1397, and 1402 each coordinate Zn(2+). The segment at C1385–C1402 adopts a C4-type; degenerate zinc-finger fold. The tract at residues E1429 to V1436 is RNA-binding. Positions L1440–Q1445 are oligomerization. An intramembrane segment occupies A1512–Y1527. Residues K1528 to F2201 lie on the Cytoplasmic side of the membrane. Position 1537 is an O-(5'-phospho-RNA)-tyrosine (Y1537). Residues G1557–F1735 form the Peptidase C3 domain. Catalysis depends on for protease 3C activity residues H1596, E1627, and C1703. One can recognise a RdRp catalytic domain in the interval G1966 to L2082. The Mg(2+) site is built by D1972 and D2068.

The protein belongs to the picornaviruses polyprotein family. As to quaternary structure, interacts with capsid protein VP1 and capsid protein VP3 to form heterotrimeric protomers. Interacts with capsid protein VP0, and capsid protein VP3 to form heterotrimeric protomers. Five protomers subsequently associate to form pentamers which serve as building blocks for the capsid. Interacts with capsid protein VP2, capsid protein VP3 and capsid protein VP4 following cleavage of capsid protein VP0. Interacts with host integrin heterodimer ITGAV/ITGB6. In terms of assembly, interacts with capsid protein VP1 and capsid protein VP3 in the mature capsid. As to quaternary structure, interacts with capsid protein VP0 and capsid protein VP1 to form heterotrimeric protomers. Five protomers subsequently associate to form pentamers which serve as building blocks for the capsid. Interacts with capsid protein VP4 in the mature capsid. Interacts with protein 2C; this interaction may be important for virion morphogenesis. Interacts with capsid protein VP1 and capsid protein VP3. In terms of assembly, homodimer. As to quaternary structure, homohexamer; forms a hexameric ring structure with 6-fold symmetry characteristic of AAA+ ATPases. Interacts (via N-terminus) with host RTN3 (via reticulon domain); this interaction is important for viral replication. Interacts with capsid protein VP3; this interaction may be important for virion morphogenesis. Interacts with protein 3CD. In terms of assembly, homodimer. Interacts with host GBF1. Interacts (via GOLD domain) with host ACBD3 (via GOLD domain); this interaction allows the formation of a viral protein 3A/ACBD3 heterotetramer with a 2:2 stoichiometry, which will stimulate the recruitment of host PI4KB in order to synthesize PI4P at the viral RNA replication sites. As to quaternary structure, interacts with RNA-directed RNA polymerase. Interacts with protein 3AB and with RNA-directed RNA polymerase. In terms of assembly, interacts with Viral protein genome-linked and with protein 3CD. It depends on Mg(2+) as a cofactor. In terms of processing, specific enzymatic cleavages in vivo by the viral proteases yield processing intermediates and the mature proteins. Myristoylation is required for the formation of pentamers during virus assembly. Further assembly of 12 pentamers and a molecule of genomic RNA generates the provirion. Post-translationally, during virion maturation, immature virions are rendered infectious following cleavage of VP0 into VP4 and VP2. This maturation seems to be an autocatalytic event triggered by the presence of RNA in the capsid and it is followed by a conformational change infectious virion. In terms of processing, myristoylation is required during RNA encapsidation and formation of the mature virus particle. VPg is uridylylated by the polymerase into VPg-pUpU. This acts as a nucleotide-peptide primer for the genomic RNA replication.

The protein resides in the virion. Its subcellular location is the host cytoplasm. It is found in the host cytoplasmic vesicle membrane. The protein localises to the host nucleus. It carries out the reaction a ribonucleoside 5'-triphosphate + H2O = a ribonucleoside 5'-diphosphate + phosphate + H(+). The enzyme catalyses Selective cleavage of Tyr-|-Gly bond in the picornavirus polyprotein.. It catalyses the reaction RNA(n) + a ribonucleoside 5'-triphosphate = RNA(n+1) + diphosphate. The catalysed reaction is Selective cleavage of Gln-|-Gly bond in the poliovirus polyprotein. In other picornavirus reactions Glu may be substituted for Gln, and Ser or Thr for Gly.. Replication or transcription is subject to high level of random mutations by the nucleotide analog ribavirin. In terms of biological role, forms an icosahedral capsid of pseudo T=3 symmetry with capsid proteins VP2 and VP3. The capsid is 300 Angstroms in diameter, composed of 60 copies of each capsid protein and enclosing the viral positive strand RNA genome. Capsid protein VP1 mainly forms the vertices of the capsid. Capsid protein VP1 interacts with host integrin ITGAV/ITGB6 to provide virion attachment to target host cells. This attachment induces virion internalization. Tyrosine kinases are probably involved in the entry process. After binding to its receptor, the capsid undergoes conformational changes. Capsid protein VP1 N-terminus (that contains an amphipathic alpha-helix) and capsid protein VP4 are externalized. Together, they shape a pore in the host membrane through which viral genome is translocated to host cell cytoplasm. Its function is as follows. Forms an icosahedral capsid of pseudo T=3 symmetry with capsid proteins VP2 and VP3. The capsid is 300 Angstroms in diameter, composed of 60 copies of each capsid protein and enclosing the viral positive strand RNA genome. Functionally, lies on the inner surface of the capsid shell. After binding to the host receptor, the capsid undergoes conformational changes. Capsid protein VP4 is released, Capsid protein VP1 N-terminus is externalized, and together, they shape a pore in the host membrane through which the viral genome is translocated into the host cell cytoplasm. Component of immature procapsids, which is cleaved into capsid proteins VP4 and VP2 after maturation. Allows the capsid to remain inactive before the maturation step. In terms of biological role, cysteine protease that cleaves viral polyprotein and specific host proteins. It is responsible for the autocatalytic cleavage between the P1 and P2 regions, which is the first cleavage occurring in the polyprotein. Also cleaves the host translation initiation factor EIF4G1, in order to shut down the capped cellular mRNA translation. Inhibits the host nucleus-cytoplasm protein and RNA trafficking by cleaving host members of the nuclear pores. Counteracts stress granule formation probably by antagonizing its assembly or promoting its dissassembly. Cleaves and inhibits host IFIH1/MDA5, thereby inhibiting the type-I IFN production and the establishment of the antiviral state. Cleaves and inhibits host MAVS, thereby inhibiting the type-I IFN production and the establishment of the antiviral state. Its function is as follows. Plays an essential role in the virus replication cycle by acting as a viroporin. Creates a pore in the host endoplasmic reticulum and as a consequence releases Ca2+ in the cytoplasm of infected cell. In turn, high levels of cytoplasmic calcium may trigger membrane trafficking and transport of viral ER-associated proteins to viroplasms, sites of viral genome replication. Functionally, induces and associates with structural rearrangements of intracellular membranes. Displays RNA-binding, nucleotide binding and NTPase activities. May play a role in virion morphogenesis and viral RNA encapsidation by interacting with the capsid protein VP3. Localizes the viral replication complex to the surface of membranous vesicles. Together with protein 3CD binds the Cis-Active RNA Element (CRE) which is involved in RNA synthesis initiation. Acts as a cofactor to stimulate the activity of 3D polymerase, maybe through a nucleid acid chaperone activity. In terms of biological role, localizes the viral replication complex to the surface of membranous vesicles. It inhibits host cell endoplasmic reticulum-to-Golgi apparatus transport and causes the disassembly of the Golgi complex, possibly through GBF1 interaction. This would result in depletion of MHC, trail receptors and IFN receptors at the host cell surface. Plays an essential role in viral RNA replication by recruiting ACBD3 and PI4KB at the viral replication sites, thereby allowing the formation of the rearranged membranous structures where viral replication takes place. Its function is as follows. Acts as a primer for viral RNA replication and remains covalently bound to viral genomic RNA. VPg is uridylylated prior to priming replication into VPg-pUpU. The oriI viral genomic sequence may act as a template for this. The VPg-pUpU is then used as primer on the genomic RNA poly(A) by the RNA-dependent RNA polymerase to replicate the viral genome. During genome replication, the VPg-RNA linkage is removed by the host TDP2, thereby accelerating replication. During the late stage of the replication cycle, host TDP2 is excluded from sites of viral RNA synthesis and encapsidation, allowing for the generation of progeny virions. Functionally, involved in the viral replication complex and viral polypeptide maturation. It exhibits protease activity with a specificity and catalytic efficiency that is different from protease 3C. Protein 3CD lacks polymerase activity. Protein 3CD binds to the 5'UTR of the viral genome. Replicates the viral genomic RNA on the surface of intracellular membranes. May form linear arrays of subunits that propagate along a strong head-to-tail interaction called interface-I. Covalently attaches UMP to a tyrosine of VPg, which is used to prime RNA synthesis. The positive stranded RNA genome is first replicated at virus induced membranous vesicles, creating a dsRNA genomic replication form. This dsRNA is then used as template to synthesize positive stranded RNA genomes. ss(+)RNA genomes are either translated, replicated or encapsidated. In terms of biological role, major viral protease that mediates proteolytic processing of the polyprotein. Cleaves host EIF5B, contributing to host translation shutoff. Also cleaves host PABPC1, contributing to host translation shutoff. Cleaves host NLRP1, triggers host N-glycine-mediated degradation of the autoinhibitory NLRP1 N-terminal fragment. The chain is Genome polyprotein from Coxsackievirus A9 (strain Griggs).